Here is a 445-residue protein sequence, read N- to C-terminus: Putative H/ACA ribonucleoprotein complex subunit 4 (445 aa).

The segment at 1-32 (MGKKDKRSKLEGDDLAEAQQKGSFQLPSSNET) is disordered. Polar residues predominate over residues 20-32 (QKGSFQLPSSNET). The active-site Nucleophile is the Asp113. The 76-residue stretch at 284-359 (HKRVVVKDSC…VVAKSKRVIM (76 aa)) folds into the PUA domain. Residues 386–445 (LDKFGKPNDTTPKSWAKEYVQTSTKKEVKKEETPDEEEEEAPKKKSKKSKKQESSDSDSD) form a disordered region.

This sequence belongs to the pseudouridine synthase TruB family. As to quaternary structure, component of the small nucleolar ribonucleoprotein particle containing H/ACA-type snoRNAs (H/ACA snoRNPs).

It is found in the nucleus. The protein resides in the nucleolus. It carries out the reaction a uridine in RNA = a pseudouridine in RNA. Functionally, plays a central role in ribosomal RNA processing. Probable catalytic subunit of H/ACA small nucleolar ribonucleoprotein (H/ACA snoRNP) complex, which catalyzes pseudouridylation of rRNA. This involves the isomerization of uridine such that the ribose is subsequently attached to C5, instead of the normal N1. Pseudouridine ('psi') residues may serve to stabilize the conformation of rRNAs. This is Putative H/ACA ribonucleoprotein complex subunit 4 from Caenorhabditis elegans.